A 232-amino-acid chain; its full sequence is 5'-methylthioadenosine/S-adenosylhomocysteine nucleosidase (232 aa).

The active-site Proton acceptor is Glu-12. Residues Gly-78, Ile-152, and 173-174 (ME) contribute to the substrate site. Asp-197 (proton donor) is an active-site residue.

The protein belongs to the PNP/UDP phosphorylase family. MtnN subfamily. As to quaternary structure, homodimer.

It catalyses the reaction S-adenosyl-L-homocysteine + H2O = S-(5-deoxy-D-ribos-5-yl)-L-homocysteine + adenine. The enzyme catalyses S-methyl-5'-thioadenosine + H2O = 5-(methylsulfanyl)-D-ribose + adenine. The catalysed reaction is 5'-deoxyadenosine + H2O = 5-deoxy-D-ribose + adenine. It functions in the pathway amino-acid biosynthesis; L-methionine biosynthesis via salvage pathway; S-methyl-5-thio-alpha-D-ribose 1-phosphate from S-methyl-5'-thioadenosine (hydrolase route): step 1/2. In terms of biological role, catalyzes the irreversible cleavage of the glycosidic bond in both 5'-methylthioadenosine (MTA) and S-adenosylhomocysteine (SAH/AdoHcy) to adenine and the corresponding thioribose, 5'-methylthioribose and S-ribosylhomocysteine, respectively. Also cleaves 5'-deoxyadenosine, a toxic by-product of radical S-adenosylmethionine (SAM) enzymes, into 5-deoxyribose and adenine. Thus, is required for in vivo function of the radical SAM enzymes biotin synthase and lipoic acid synthase, that are inhibited by 5'-deoxyadenosine accumulation. The chain is 5'-methylthioadenosine/S-adenosylhomocysteine nucleosidase from Citrobacter koseri (strain ATCC BAA-895 / CDC 4225-83 / SGSC4696).